The sequence spans 410 residues: WD repeat and FYVE domain-containing protein 1 (410 aa).

WD repeat units follow at residues 22–61 (GHQDAVTAALLIPKEDGVITASEDRTIRVWLKRDSGQYWP), 66–105 (TMASPCSAMAYHHDSRRIFVGQDNGAVMEFHVSEDFNKMN), 112–150 (AHQNRVSAIIFSLATEWVISTGHDKCVSWMCTRSGNMLG), 153–192 (FFTSWASCLQYDFDTQYAFVGDYSGQITLLKLEQNTCSVI), 197–236 (GHEGSVACLWWDPIQRLLFSGASDNSIIMWDIGGRKGRTL), and 240–279 (GHHDKVQSLCYLQLTRQLVSCSSDGGIAVWNMDVSREEAP). The segment at 281–352 (WLESDSCQKC…VCDSCYDSIK (72 aa)) adopts an FYVE-type zinc-finger fold. Residues Cys287, Cys290, Cys314, Cys317, Cys322, Cys325, Cys344, and Cys347 each contribute to the Zn(2+) site. A WD 7 repeat occupies 364–403 (EGKHNISHMSMDIARGLMVTCGTDRIVKIWDMTPVVGCSL). Position 408 is a phosphoserine (Ser408).

In terms of assembly, binds PtdIns3P in vitro with high specificity over other phosphoinositides. Interacts (via WD repeat 2) with tyrosine-phosphorylated TLR3 (via TIR domain) in response to poly(I:C). Interacts with TICAM1 in response to poly(I:C). Interacts with TLR4 in response to LPS.

It is found in the early endosome. Its function is as follows. Positively regulates TLR3- and TLR4-mediated signaling pathways by bridging the interaction between TLR3 or TLR4 and TICAM1. Promotes TLR3/4 ligand-induced activation of transcription factors IRF3 and NF-kappa-B, as well as the production of IFN-beta and inflammatory cytokines. In Homo sapiens (Human), this protein is WD repeat and FYVE domain-containing protein 1 (WDFY1).